The chain runs to 578 residues: Proline--tRNA ligase (578 aa).

It belongs to the class-II aminoacyl-tRNA synthetase family. ProS type 1 subfamily. In terms of assembly, homodimer.

It localises to the cytoplasm. It carries out the reaction tRNA(Pro) + L-proline + ATP = L-prolyl-tRNA(Pro) + AMP + diphosphate. Catalyzes the attachment of proline to tRNA(Pro) in a two-step reaction: proline is first activated by ATP to form Pro-AMP and then transferred to the acceptor end of tRNA(Pro). As ProRS can inadvertently accommodate and process non-cognate amino acids such as alanine and cysteine, to avoid such errors it has two additional distinct editing activities against alanine. One activity is designated as 'pretransfer' editing and involves the tRNA(Pro)-independent hydrolysis of activated Ala-AMP. The other activity is designated 'posttransfer' editing and involves deacylation of mischarged Ala-tRNA(Pro). The misacylated Cys-tRNA(Pro) is not edited by ProRS. The sequence is that of Proline--tRNA ligase from Burkholderia cenocepacia (strain ATCC BAA-245 / DSM 16553 / LMG 16656 / NCTC 13227 / J2315 / CF5610) (Burkholderia cepacia (strain J2315)).